The following is a 74-amino-acid chain: ATP synthase subunit 9, mitochondrial (74 aa).

The next 2 helical transmembrane spans lie at 8–28 and 45–72; these read IGAGAATIASAGAAVGIGNVF and LFGYAILGFALTEAIALFALMMAFLILF.

This sequence belongs to the ATPase C chain family. F-type ATPases have 2 components, CF(1) - the catalytic core - and CF(0) - the membrane proton channel. CF(1) has five subunits: alpha(3), beta(3), gamma(1), delta(1), epsilon(1). CF(0) has three main subunits: a, b and c.

Its subcellular location is the mitochondrion membrane. Its function is as follows. This protein is one of the chains of the nonenzymatic membrane component (F0) of mitochondrial ATPase. The chain is ATP synthase subunit 9, mitochondrial (ATP9) from Pisum sativum (Garden pea).